The primary structure comprises 275 residues: Putative hydro-lyase SPO1111 (275 aa).

It belongs to the D-glutamate cyclase family.

The polypeptide is Putative hydro-lyase SPO1111 (Ruegeria pomeroyi (strain ATCC 700808 / DSM 15171 / DSS-3) (Silicibacter pomeroyi)).